Here is a 129-residue protein sequence, read N- to C-terminus: Small ribosomal subunit protein uS11 (129 aa).

It belongs to the universal ribosomal protein uS11 family. Part of the 30S ribosomal subunit. Interacts with proteins S7 and S18. Binds to IF-3.

Functionally, located on the platform of the 30S subunit, it bridges several disparate RNA helices of the 16S rRNA. Forms part of the Shine-Dalgarno cleft in the 70S ribosome. The protein is Small ribosomal subunit protein uS11 of Bacillus cereus (strain G9842).